A 361-amino-acid chain; its full sequence is NudC domain-containing protein 3 (361 aa).

A compositionally biased stretch (basic and acidic residues) spans Lys-87–Lys-97. Disordered regions lie at residues Lys-87–Lys-106 and Leu-124–Ala-158. At Ser-146 the chain carries Phosphoserine. Positions Glu-148–Ala-158 are enriched in low complexity. The CS domain occupies Ala-185–Leu-277. Residues Ser-340 and Ser-355 each carry the phosphoserine modification.

In Homo sapiens (Human), this protein is NudC domain-containing protein 3 (NUDCD3).